We begin with the raw amino-acid sequence, 66 residues long: Large ribosomal subunit protein bL33c (66 aa).

As to quaternary structure, component of the chloroplast large ribosomal subunit (LSU). Mature 70S chloroplast ribosomes of higher plants consist of a small (30S) and a large (50S) subunit. The 30S small subunit contains 1 molecule of ribosomal RNA (16S rRNA) and 24 different proteins. The 50S large subunit contains 3 rRNA molecules (23S, 5S and 4.5S rRNA) and 33 different proteins.

It localises to the plastid. The protein localises to the chloroplast. Its function is as follows. Component of the chloroplast ribosome (chloro-ribosome), a dedicated translation machinery responsible for the synthesis of chloroplast genome-encoded proteins, including proteins of the transcription and translation machinery and components of the photosynthetic apparatus. This chain is Large ribosomal subunit protein bL33c (rpl33), found in Spinacia oleracea (Spinach).